Reading from the N-terminus, the 281-residue chain is CCAAT/enhancer-binding protein epsilon (281 aa).

The interval 1–30 is disordered; sequence MSHGTYYECEPRGGQQPLEFSGGRAGPGEL. Residue Lys-121 forms a Glycyl lysine isopeptide (Lys-Gly) (interchain with G-Cter in SUMO2) linkage. Ser-181 carries the phosphoserine modification. In terms of domain architecture, bZIP spans 204-267; it reads SLEYRLRRER…DTLRNLFRQI (64 aa). The interval 208–228 is basic motif; it reads RLRRERNNIAVRKSRDKAKRR. The leucine-zipper stretch occupies residues 230–237; that stretch reads LETQQKVL.

It belongs to the bZIP family. C/EBP subfamily. Binds DNA as a homodimer and as a heterodimer. Can form stable heterodimers with CEBPA, CEBPB and CEBPD. Interacts with GATA1 and SPI1. Interacts with SMARCD2. In terms of processing, phosphorylated. As to expression, strongest expression occurs in promyelocyte and late-myeloblast-like cell lines.

The protein localises to the nucleus. In terms of biological role, transcriptional activator. C/EBP are DNA-binding proteins that recognize two different motifs: the CCAAT homology common to many promoters and the enhanced core homology common to many enhancers. Required for the promyelocyte-myelocyte transition in myeloid differentiation. The protein is CCAAT/enhancer-binding protein epsilon (CEBPE) of Homo sapiens (Human).